Reading from the N-terminus, the 75-residue chain is uncharacterized protein (75 aa).

Residues 12-32 (LKVFILFTGFTALFYYAMIWV) form a helical membrane-spanning segment.

It localises to the cell membrane. This is an uncharacterized protein from Bacillus subtilis (strain 168).